Consider the following 454-residue polypeptide: SSLLSIPSLSLQYNDKLKVGGNSLRFSKEQSNTFSNAKSSCRISMVAAVNVSRFEGIPMAPPDPILGVSEAFRADTSDAKLNLGVGAYRTEELQPYVLKVVNKAENLMLERGQNKEYLAIEGLAAFNKATAELLLGADNPAIKQQRVATVQGLSGTGSLRLGAALIERYFPGAKVLISAPTWGNHKNIFNDARVPWSEYRYYDPKTVGLDFEGMIEDIKAAPEGTFVLLHGCAHNPTGIDPTPEQWEKIADVIQEKNHIPFFDVAYQGFASGSLDEDAASVRLFVARGLEVLVAQSYSKNLGLYAERIGAINVISSSPESAARVKSQLKRIARPMYSNPPVHGARIVADIVGNPALFDEWKVEMEMMAGRIKNVRQQLYDSISSKDKSGKDWSFILKQIGMFSYTGLNKNQSDNMTNKWHVYMTKDGRISLAGLSLAKCEYLADAIIDSFHYVS.

The N-terminal 49 residues, 1–49, are a transit peptide targeting the mitochondrion; it reads SSLLSIPSLSLQYNDKLKVGGNSLRFSKEQSNTFSNAKSSCRISMVAAV. Positions 86, 182, and 235 each coordinate L-aspartate. An N6-(pyridoxal phosphate)lysine modification is found at Lys299. Arg428 serves as a coordination point for L-aspartate.

The protein belongs to the class-I pyridoxal-phosphate-dependent aminotransferase family. In terms of assembly, homodimer. Pyridoxal 5'-phosphate serves as cofactor.

Its subcellular location is the mitochondrion matrix. It carries out the reaction L-aspartate + 2-oxoglutarate = oxaloacetate + L-glutamate. In terms of biological role, important for the metabolism of amino acids and Krebs-cycle related organic acids. In plants, it is involved in nitrogen metabolism and in aspects of carbon and energy metabolism. This is Aspartate aminotransferase P2, mitochondrial from Lupinus angustifolius (Narrow-leaved blue lupine).